A 268-amino-acid polypeptide reads, in one-letter code: Sterol uptake protein 2 (268 aa).

Belongs to the SUT1 family.

The protein localises to the nucleus. Functionally, putative transcription factor involved in the regulation of the activity of the cAMP/protein kinase A pathway. Involved in sterol uptake. With SUT1, positively regulates mating by repressing the expression of the mating inhibitors NCE102, PRR2 and RHO5 in response to pheromone. This Saccharomyces cerevisiae (strain ATCC 204508 / S288c) (Baker's yeast) protein is Sterol uptake protein 2.